Here is a 901-residue protein sequence, read N- to C-terminus: Flowering time control protein FPA (901 aa).

3 RRM domains span residues 18-90 (NNLW…YARP), 95-166 (KSLW…FLRS), and 206-281 (KVLW…YSND). The interval 343 to 416 (VGKEPNWRRP…SVDGFTPMGV (74 aa)) is disordered. One can recognise an SPOC domain in the interval 441–537 (WRGMIAKGGT…DDGTTLFLVP (97 aa)). Positions 655–736 (SQPAAPESHQ…YPPASNNPNY (82 aa)) are disordered. Polar residues-rich tracts occupy residues 664 to 682 (QPMSGPSTVVSTAHQSNGL) and 700 to 716 (HDASNQSFQQYGNQYTP).

This sequence belongs to the RRM Spen family. In terms of tissue distribution, expressed in roots, leaves, stems and flowers. Highest expression in flower stems and meristematic regions.

It is found in the nucleus. In terms of biological role, plays a role in the regulation of flowering time in the autonomous flowering pathway by decreasing FLOWERING LOCUS C mRNA levels. Required for RNA-mediated chromatin silencing of a range of loci in the genome. Cotranscriptionally recognizes aberrant RNA and marks it for silencing. Controls alternative cleavage and polyadenylation on pre-mRNAs and antisense RNAs. Acts redundantly with FCA to prevent the expression of distally polyadenylated antisense RNAs at the FLC locus. The protein is Flowering time control protein FPA (FPA) of Arabidopsis thaliana (Mouse-ear cress).